We begin with the raw amino-acid sequence, 565 residues long: Proline--tRNA ligase (565 aa).

This sequence belongs to the class-II aminoacyl-tRNA synthetase family. ProS type 1 subfamily. As to quaternary structure, homodimer.

The protein resides in the cytoplasm. It carries out the reaction tRNA(Pro) + L-proline + ATP = L-prolyl-tRNA(Pro) + AMP + diphosphate. In terms of biological role, catalyzes the attachment of proline to tRNA(Pro) in a two-step reaction: proline is first activated by ATP to form Pro-AMP and then transferred to the acceptor end of tRNA(Pro). As ProRS can inadvertently accommodate and process non-cognate amino acids such as alanine and cysteine, to avoid such errors it has two additional distinct editing activities against alanine. One activity is designated as 'pretransfer' editing and involves the tRNA(Pro)-independent hydrolysis of activated Ala-AMP. The other activity is designated 'posttransfer' editing and involves deacylation of mischarged Ala-tRNA(Pro). The misacylated Cys-tRNA(Pro) is not edited by ProRS. The protein is Proline--tRNA ligase of Campylobacter lari (strain RM2100 / D67 / ATCC BAA-1060).